Reading from the N-terminus, the 374-residue chain is tRNA-specific 2-thiouridylase MnmA (374 aa).

ATP-binding positions include 12 to 19 and M38; that span reads GMSGGVDS. Residues 98–100 form an interaction with target base in tRNA region; sequence NPD. The Nucleophile role is filled by C103. C103 and C200 are disulfide-bonded. G127 contacts ATP. Residues 150–152 form an interaction with tRNA region; sequence KDQ. The active-site Cysteine persulfide intermediate is the C200. The interval 311 to 312 is interaction with tRNA; it reads RY.

Belongs to the MnmA/TRMU family.

The protein localises to the cytoplasm. It carries out the reaction S-sulfanyl-L-cysteinyl-[protein] + uridine(34) in tRNA + AH2 + ATP = 2-thiouridine(34) in tRNA + L-cysteinyl-[protein] + A + AMP + diphosphate + H(+). Catalyzes the 2-thiolation of uridine at the wobble position (U34) of tRNA, leading to the formation of s(2)U34. The chain is tRNA-specific 2-thiouridylase MnmA from Lactiplantibacillus plantarum (strain ATCC BAA-793 / NCIMB 8826 / WCFS1) (Lactobacillus plantarum).